Reading from the N-terminus, the 381-residue chain is Putative F-box/kelch-repeat protein At3g17570 (381 aa).

Residues 1–45 (MFTDLPRDLETEILSRVPATSLQKLKPTCKRWYTLFKDPEFLKKH) form the F-box domain. Kelch repeat units lie at residues 151–199 (SYKI…TLKG), 229–281 (LLYQ…KIVE), and 331–379 (RFYI…GGKR).

This Arabidopsis thaliana (Mouse-ear cress) protein is Putative F-box/kelch-repeat protein At3g17570.